A 63-amino-acid polypeptide reads, in one-letter code: Lysis protein (63 aa).

A helical membrane pass occupies residues 21 to 43 (LYVWIALAIVLSDFTSIFSHWIW).

This sequence belongs to the Leviviricetes lysis protein family.

It is found in the host cell inner membrane. The protein localises to the host cell outer membrane. Induces the formation of specific membrane adhesion sites between the inner and outer membranes, apparently leading to host cell lysis. Lysis may be performed via activation of host murein hydrolases. The sequence is that of Lysis protein from Escherichia coli (Bacteriophage JP34).